A 727-amino-acid chain; its full sequence is Non-structural protein 4 (727 aa).

Disordered regions lie at residues Met1–Gly38 and Gly671–Lys727. Residues Arg17–Gly38 show a composition bias toward polar residues. Residues Ser712–Lys727 are compositionally biased toward basic residues.

The polypeptide is Non-structural protein 4 (Rice dwarf virus (isolate Fujian) (RDV)).